The sequence spans 180 residues: uncharacterized protein (180 aa).

One can recognise an N-acetyltransferase domain in the interval F45–N180.

Belongs to the acetyltransferase family. Ycf52 subfamily.

This is an uncharacterized protein from Prochlorococcus marinus (strain SARG / CCMP1375 / SS120).